Reading from the N-terminus, the 88-residue chain is Cell division topological specificity factor (88 aa).

This sequence belongs to the MinE family.

Functionally, prevents the cell division inhibition by proteins MinC and MinD at internal division sites while permitting inhibition at polar sites. This ensures cell division at the proper site by restricting the formation of a division septum at the midpoint of the long axis of the cell. The chain is Cell division topological specificity factor from Pseudoalteromonas translucida (strain TAC 125).